We begin with the raw amino-acid sequence, 112 residues long: uncharacterized protein (112 aa).

The signal sequence occupies residues 1–29; that stretch reads MINLHRLCIIHVVATLLSTLLSLISVAIS. An N-linked (GlcNAc...) asparagine glycan is attached at N84. The tract at residues 84–112 is disordered; the sequence is NLSKGYNQRPEGSKEESHMVVKEKRKGDH. Over residues 94 to 112 the composition is skewed to basic and acidic residues; sequence EGSKEESHMVVKEKRKGDH.

Its subcellular location is the secreted. This is an uncharacterized protein from Homo sapiens (Human).